The sequence spans 504 residues: 2-methylcitrate dehydratase 2 (504 aa).

It belongs to the PrpD family. As to quaternary structure, monomer.

It carries out the reaction (2S,3S)-2-methylcitrate = 2-methyl-cis-aconitate + H2O. The catalysed reaction is citrate = D-threo-isocitrate. The protein operates within organic acid metabolism; propanoate degradation. It participates in carbohydrate metabolism; tricarboxylic acid cycle; isocitrate from oxaloacetate: step 1/2. Involved in the catabolism of short chain fatty acids (SCFA) via the 2-methylcitrate cycle I (propionate degradation route). Catalyzes the dehydration of 2-methylcitrate (2-MC) to yield the cis isomer 2-methyl-aconitate. Could also catalyze the dehydration of citrate and the hydration of cis-aconitate. In Corynebacterium glutamicum (strain ATCC 13032 / DSM 20300 / JCM 1318 / BCRC 11384 / CCUG 27702 / LMG 3730 / NBRC 12168 / NCIMB 10025 / NRRL B-2784 / 534), this protein is 2-methylcitrate dehydratase 2 (prpD2).